A 135-amino-acid polypeptide reads, in one-letter code: Putative pre-16S rRNA nuclease (135 aa).

It belongs to the YqgF nuclease family.

It localises to the cytoplasm. Its function is as follows. Could be a nuclease involved in processing of the 5'-end of pre-16S rRNA. The sequence is that of Putative pre-16S rRNA nuclease from Maridesulfovibrio salexigens (strain ATCC 14822 / DSM 2638 / NCIMB 8403 / VKM B-1763) (Desulfovibrio salexigens).